Here is a 175-residue protein sequence, read N- to C-terminus: Outer membrane protein assembly factor BamE (175 aa).

Positions 1-21 (MQNTKLLLTSFTFVGLLALAG) are cleaved as a signal peptide. A lipid anchor (N-palmitoyl cysteine) is attached at C22. Residue C22 is the site of S-diacylglycerol cysteine attachment. Disordered regions lie at residues 117 to 147 (ALLG…KPGS) and 156 to 175 (IDNV…TSPQ).

It belongs to the BamE family. Part of the Bam complex.

The protein localises to the cell outer membrane. Its function is as follows. Part of the outer membrane protein assembly complex, which is involved in assembly and insertion of beta-barrel proteins into the outer membrane. May have a structural role in maintaining the cell envelope integrity. The sequence is that of Outer membrane protein assembly factor BamE from Pseudomonas fluorescens.